The chain runs to 96 residues: Aspartyl/glutamyl-tRNA(Asn/Gln) amidotransferase subunit C (96 aa).

It belongs to the GatC family. As to quaternary structure, heterotrimer of A, B and C subunits.

The catalysed reaction is L-glutamyl-tRNA(Gln) + L-glutamine + ATP + H2O = L-glutaminyl-tRNA(Gln) + L-glutamate + ADP + phosphate + H(+). It catalyses the reaction L-aspartyl-tRNA(Asn) + L-glutamine + ATP + H2O = L-asparaginyl-tRNA(Asn) + L-glutamate + ADP + phosphate + 2 H(+). Functionally, allows the formation of correctly charged Asn-tRNA(Asn) or Gln-tRNA(Gln) through the transamidation of misacylated Asp-tRNA(Asn) or Glu-tRNA(Gln) in organisms which lack either or both of asparaginyl-tRNA or glutaminyl-tRNA synthetases. The reaction takes place in the presence of glutamine and ATP through an activated phospho-Asp-tRNA(Asn) or phospho-Glu-tRNA(Gln). The polypeptide is Aspartyl/glutamyl-tRNA(Asn/Gln) amidotransferase subunit C (Symbiobacterium thermophilum (strain DSM 24528 / JCM 14929 / IAM 14863 / T)).